The following is a 518-amino-acid chain: Coiled-coil domain-containing protein 82 (518 aa).

Residues 1–14 (MVHVRRHETRKNSK) are compositionally biased toward basic residues. The segment at 1 to 266 (MVHVRRHETR…EDDYRYDEDG (266 aa)) is disordered. Positions 16–27 (QKPEQKSRVDWH) are enriched in basic and acidic residues. Acidic residues predominate over residues 38–67 (DSDEELDSNEELDSDEEHDSGESIDSDEEL). Positions 68-89 (DISKKSDINELPEKETELKLIK) are enriched in basic and acidic residues. A compositionally biased stretch (polar residues) spans 92–107 (SQGSNSKHLTNTSNSS). Over residues 111 to 127 (EQLKETKHNDLPDDEAH) the composition is skewed to basic and acidic residues. Phosphoserine is present on residues Ser170 and Ser194. A compositionally biased stretch (acidic residues) spans 191-201 (DECSSLEMEQE). At Thr202 the chain carries Phosphothreonine. A coiled-coil region spans residues 204–232 (EKSSAARKREYHQKLQELSERSRQRRRRN). Basic and acidic residues predominate over residues 215–225 (HQKLQELSERS). A compositionally biased stretch (acidic residues) spans 249–266 (GEEDEDEDEDDYRYDEDG). The residue at position 305 (Ser305) is a Phosphoserine.

This is Coiled-coil domain-containing protein 82 (Ccdc82) from Mus musculus (Mouse).